The primary structure comprises 418 residues: STE20-related kinase adapter protein beta (418 aa).

A Protein kinase domain is found at 58-369; sequence YELQVEIGRG…ASSLLSHVFF (312 aa). Residues 64–72 and K89 each bind ATP; that span reads IGRGFDNLT.

Belongs to the protein kinase superfamily. STE Ser/Thr protein kinase family. STE20 subfamily. As to quaternary structure, component of a trimeric complex composed of STK11/LKB1, STRAD (STRADA or STRADB) and CAB39/MO25 (CAB39/MO25alpha or CAB39L/MO25beta): the complex tethers STK11/LKB1 in the cytoplasm and stimulates its catalytic activity. Interacts with BIRC4/XIAP. These two proteins are likely to coexist in a complex with TAK1, TRAF6, TAB1 and TAB2.

The protein resides in the nucleus. It is found in the cytoplasm. Pseudokinase which, in complex with CAB39/MO25 (CAB39/MO25alpha or CAB39L/MO25beta), binds to and activates STK11/LKB1. Adopts a closed conformation typical of active protein kinases and binds STK11/LKB1 as a pseudosubstrate, promoting conformational change of STK11/LKB1 in an active conformation. The sequence is that of STE20-related kinase adapter protein beta (Stradb) from Mus musculus (Mouse).